Here is a 404-residue protein sequence, read N- to C-terminus: Phosphoglycerate kinase (404 aa).

Substrate contacts are provided by residues 21–23, Arg-38, 61–64, Arg-126, and Arg-159; these read DFN and HLGR. Residues Lys-210, Glu-333, and 360–363 contribute to the ATP site; that span reads GGDS.

This sequence belongs to the phosphoglycerate kinase family. Monomer.

Its subcellular location is the cytoplasm. It catalyses the reaction (2R)-3-phosphoglycerate + ATP = (2R)-3-phospho-glyceroyl phosphate + ADP. It functions in the pathway carbohydrate degradation; glycolysis; pyruvate from D-glyceraldehyde 3-phosphate: step 2/5. This is Phosphoglycerate kinase from Acidobacterium capsulatum (strain ATCC 51196 / DSM 11244 / BCRC 80197 / JCM 7670 / NBRC 15755 / NCIMB 13165 / 161).